The chain runs to 72 residues: NAD(P)H-quinone oxidoreductase subunit O (72 aa).

Belongs to the complex I NdhO subunit family. NDH-1 can be composed of about 15 different subunits; different subcomplexes with different compositions have been identified which probably have different functions.

It is found in the cellular thylakoid membrane. It carries out the reaction a plastoquinone + NADH + (n+1) H(+)(in) = a plastoquinol + NAD(+) + n H(+)(out). It catalyses the reaction a plastoquinone + NADPH + (n+1) H(+)(in) = a plastoquinol + NADP(+) + n H(+)(out). NDH-1 shuttles electrons from an unknown electron donor, via FMN and iron-sulfur (Fe-S) centers, to quinones in the respiratory and/or the photosynthetic chain. The immediate electron acceptor for the enzyme in this species is believed to be plastoquinone. Couples the redox reaction to proton translocation, and thus conserves the redox energy in a proton gradient. Cyanobacterial NDH-1 also plays a role in inorganic carbon-concentration. The chain is NAD(P)H-quinone oxidoreductase subunit O from Crocosphaera subtropica (strain ATCC 51142 / BH68) (Cyanothece sp. (strain ATCC 51142)).